We begin with the raw amino-acid sequence, 430 residues long: Proteasome-activating nucleotidase (430 aa).

Residues 9–89 are a coiled coil; it reads TELKKEKKAF…LRRELDRMRV (81 aa). ATP contacts are provided by residues 214-219 and histidine 353; that span reads GTGKTL. The docks into pockets in the proteasome alpha-ring to cause gate opening stretch occupies residues 428 to 430; it reads LYR.

Belongs to the AAA ATPase family. As to quaternary structure, homohexamer. The hexameric complex has a two-ring architecture resembling a top hat that caps the 20S proteasome core at one or both ends. Alone, can form a complex composed of two stacked hexameric rings in vitro. Upon ATP-binding, the C-terminus of PAN interacts with the alpha-rings of the proteasome core by binding to the intersubunit pockets.

It localises to the cytoplasm. Its activity is regulated as follows. ATPase activity is inhibited by EDTA, N-ethylmaleimide (NEM) and p-chloromercuriphenyl-sulfonic acid (PCMS) in vitro. Its function is as follows. ATPase which is responsible for recognizing, binding, unfolding and translocation of substrate proteins into the archaeal 20S proteasome core particle. Is essential for opening the gate of the 20S proteasome via an interaction with its C-terminus, thereby allowing substrate entry and access to the site of proteolysis. Thus, the C-termini of the proteasomal ATPase function like a 'key in a lock' to induce gate opening and therefore regulate proteolysis. Unfolding activity requires energy from ATP hydrolysis, whereas ATP binding alone promotes ATPase-20S proteasome association which triggers gate opening, and supports translocation of unfolded substrates. In addition to ATP, is able to cleave other nucleotide triphosphates such as CTP, GTP and UTP, but hydrolysis of these other nucleotides is less effective in promoting proteolysis than ATP. Moreover, PAN by itself can function as a chaperone in vitro. The polypeptide is Proteasome-activating nucleotidase (Methanocaldococcus jannaschii (strain ATCC 43067 / DSM 2661 / JAL-1 / JCM 10045 / NBRC 100440) (Methanococcus jannaschii)).